We begin with the raw amino-acid sequence, 464 residues long: Soluble pyridine nucleotide transhydrogenase (464 aa).

FAD is bound at residue 35 to 44 (DSRRQVGGNC).

It belongs to the class-I pyridine nucleotide-disulfide oxidoreductase family. FAD is required as a cofactor.

Its subcellular location is the cytoplasm. The enzyme catalyses NAD(+) + NADPH = NADH + NADP(+). Conversion of NADPH, generated by peripheral catabolic pathways, to NADH, which can enter the respiratory chain for energy generation. In Pseudomonas syringae pv. syringae (strain B728a), this protein is Soluble pyridine nucleotide transhydrogenase.